Here is a 582-residue protein sequence, read N- to C-terminus: Poly(A) RNA polymerase, mitochondrial (582 aa).

The transit peptide at 1–37 (MAVPGVGLLTRLNLCARRRTRVQRPIVRLLSCPGTVA) directs the protein to the mitochondrion. Lys-90 carries the post-translational modification N6-acetyllysine. Residues 107–109 (YES) and 241–242 (GC) contribute to the ATP site. Residues Asp-243 and Asp-245 each coordinate Mg(2+). The PAP-associated domain occupies 437–483 (LELLLKEFFEYFGNFAFDKNSINIRQGREQNKPDSSPLYIQNPFETS).

The protein belongs to the DNA polymerase type-B-like family. In terms of assembly, homodimer. The cofactor is Mg(2+). It depends on Mn(2+) as a cofactor. Ubiquitous, with stronger expression in tissues with high energy requirements: heart, brain, and skeletal muscle.

The protein resides in the cytoplasm. Its subcellular location is the mitochondrion. The catalysed reaction is RNA(n) + ATP = RNA(n)-3'-adenine ribonucleotide + diphosphate. Polymerase that creates the 3' poly(A) tail of mitochondrial transcripts. Can use all four nucleotides, but has higher activity with ATP and UTP (in vitro). Plays a role in replication-dependent histone mRNA degradation. May be involved in the terminal uridylation of mature histone mRNAs before their degradation is initiated. Might be responsible for the creation of some UAA stop codons which are not encoded in mtDNA. This Homo sapiens (Human) protein is Poly(A) RNA polymerase, mitochondrial (MTPAP).